We begin with the raw amino-acid sequence, 121 residues long: Met-lysine-1b (121 aa).

An N-terminal signal peptide occupies residues 1 to 22 (MKSFVFALALIVAFACISESKS). A propeptide spanning residues 23 to 69 (DHTGYEEEENLEDSELTDLVAAALLEELAEASEMDDLSYTEEAGGER) is cleaved from the precursor. Met-120 is modified (methionine amide).

In terms of tissue distribution, expressed by the venom gland.

The protein localises to the secreted. In terms of biological role, shows no antimicrobial activity against Gram-positive bacterium B.subtilis B-501 or Gram-negative bacterium E.coli DH5-alpha at concentrations up to 20 ug/ml. Shows no toxicity towards insect (S.carnaria) larvae. In Lachesana tarabaevi (Spider), this protein is Met-lysine-1b.